Consider the following 755-residue polypeptide: Histone-lysine N-methyltransferase, H3 lysine-9 specific SUVH8 (755 aa).

Disordered regions lie at residues 62-98 (YDRDAGPSTGPVHRERSDAVNEEAHATSIPPHAPPQT) and 111-243 (YDRD…KMVI). 2 stretches are compositionally biased toward basic and acidic residues: residues 73–86 (VHRERSDAVNEEAH) and 122–135 (IDREASHEVNEDAH). The a.T hook DNA-binding region spans 174–186 (KRGRGRPKGSKNG). Basic residues predominate over residues 174-193 (KRGRGRPKGSKNGSRKPKKP). Positions 197 to 207 (DNNSTDASAGP) are enriched in polar residues. A compositionally biased stretch (basic residues) spans 212–231 (GKRRCGRPKGLKNRSRKPKK). Residues 310-448 (GPIPGVQVGD…FKEYRFKLLR (139 aa)) enclose the YDG domain. One can recognise a Pre-SET domain in the interval 528-578 (QSLVQSYIHQNCTCILKNCGQLPYHDNILVCRKPLIYECGGSCPTRMVETG). The SET domain occupies 581–723 (LHLEVFKTSN…PMTELTYDYG (143 aa)). Residues 591-593 (CGW), D624, Y626, R676, and 679-680 (NH) contribute to the S-adenosyl-L-methionine site. 4 residues coordinate Zn(2+): C682, C743, C745, and C750. The 17-residue stretch at 739-755 (GKKICLCGSVKCRGSFG) folds into the Post-SET domain.

It belongs to the class V-like SAM-binding methyltransferase superfamily. Histone-lysine methyltransferase family. Suvar3-9 subfamily.

Its subcellular location is the nucleus. The protein resides in the chromosome. The protein localises to the centromere. The enzyme catalyses N(6)-methyl-L-lysyl(9)-[histone H3] + S-adenosyl-L-methionine = N(6),N(6)-dimethyl-L-lysyl(9)-[histone H3] + S-adenosyl-L-homocysteine + H(+). It catalyses the reaction L-lysyl(9)-[histone H3] + S-adenosyl-L-methionine = N(6)-methyl-L-lysyl(9)-[histone H3] + S-adenosyl-L-homocysteine + H(+). In terms of biological role, histone methyltransferase. Methylates 'Lys-9' of histone H3. H3 'Lys-9' methylation represents a specific tag for epigenetic transcriptional repression. The sequence is that of Histone-lysine N-methyltransferase, H3 lysine-9 specific SUVH8 (SUVH8) from Arabidopsis thaliana (Mouse-ear cress).